A 564-amino-acid chain; its full sequence is Poly(U)-binding-splicing factor PUF60 (564 aa).

Positions 1 to 521 (MATATIALQV…EDAEIIVKIF (521 aa)) are inhibits homodimerization. The segment at 37-61 (KWKPPQGTESIKMENGQSTGTKLGL) is disordered. Residue Lys48 forms a Glycyl lysine isopeptide (Lys-Gly) (interchain with G-Cter in SUMO2) linkage. Thr65 bears the Phosphothreonine mark. The interval 82 to 564 (QSIKSVLVKQ…ERFDNSDLSA (483 aa)) is inhibits transcriptional repression, interaction with ERCC3 and apoptosis induction. Residue Lys85 forms a Glycyl lysine isopeptide (Lys-Gly) (interchain with G-Cter in SUMO2) linkage. Phosphoserine is present on Ser117. RRM domains are found at residues 134-212 (CRVY…RPSN) and 231-309 (NRIY…KAVT). Ser249 is modified (phosphoserine). Lys256 bears the N6-acetyllysine mark. Thr319 is modified (phosphothreonine). The disordered stretch occupies residues 421–442 (KKEKEEEELFPESERPEMLSEQ). Lys424 is covalently cross-linked (Glycyl lysine isopeptide (Lys-Gly) (interchain with G-Cter in SUMO2)). Residues 432 to 442 (ESERPEMLSEQ) are compositionally biased toward basic and acidic residues. At Lys459 the chain carries N6-acetyllysine. A Glycyl lysine isopeptide (Lys-Gly) (interchain with G-Cter in SUMO2) cross-link involves residue Lys463. The region spanning 467–554 (TVMVLRNMVD…RKVVAEVYDQ (88 aa)) is the RRM 3; atypical domain.

Belongs to the RRM half pint family. Homodimer. Associates with the spliceosome. Found in a complex with RO60 and Y5 RNA. Found in a complex with FUBP1 and far upstream element (FUSE) DNA segment. Interacts directly with ERCC3. Interacts with CDK7 and GTF2H1. Interacts with SRSF11/P54. Interacts with ARGLU1; interaction may be involved in ARGLU1-mediated modulation of alternative splicing.

It localises to the nucleus. DNA- and RNA-binding protein, involved in several nuclear processes such as pre-mRNA splicing, apoptosis and transcription regulation. In association with FUBP1 regulates MYC transcription at the P2 promoter through the core-TFIIH basal transcription factor. Acts as a transcriptional repressor through the core-TFIIH basal transcription factor. Represses FUBP1-induced transcriptional activation but not basal transcription. Decreases ERCC3 helicase activity. Is also involved in pre-mRNA splicing. Promotes splicing of an intron with weak 3'-splice site and pyrimidine tract in a cooperative manner with U2AF2. Involved in apoptosis induction when overexpressed in HeLa cells. Modulates alternative splicing of several mRNAs. Binds to relaxed DNA of active promoter regions. Binds to the pyrimidine tract and 3'-splice site regions of pre-mRNA; binding is enhanced in presence of U2AF2. Binds to Y5 RNA in association with RO60. Binds to poly(U) RNA. This is Poly(U)-binding-splicing factor PUF60 from Rattus norvegicus (Rat).